Reading from the N-terminus, the 160-residue chain is Cytosolic iron-sulfur assembly component 2A (160 aa).

H89, H123, E150, and E153 together coordinate Zn(2+).

The protein belongs to the MIP18 family. As to quaternary structure, monomer and homodimer. Component of the CIA complex. Interacts with CIAO1. Interacts with IREB2. Interacts with APAF1. As to expression, substantially enriched in macrophages.

It localises to the cytoplasm. Its function is as follows. Component of the cytosolic iron-sulfur protein assembly (CIA) complex, a multiprotein complex that mediates the incorporation of iron-sulfur cluster into extramitochondrial Fe/S proteins. As a CIA complex component and in collaboration with CIAO1 specifically matures ACO1 and stabilizes IREB2, connecting cytosolic iron-sulfur protein maturation with cellular iron regulation. May play a role in chromosome segregation through establishment of sister chromatid cohesion. May induce apoptosis in collaboration with APAF1. The sequence is that of Cytosolic iron-sulfur assembly component 2A from Homo sapiens (Human).